The chain runs to 168 residues: MAYTRSKIVDLVDGKIDPDTLHQMLSTPKDPERFVTYVEILQERMPWDDKIILPLGPKLFIVQQKVSKKWTVRCECGHDFCDWKDNWKLSARVHVRDTPQKMEEIYPRLMAPTPSWQVIREYFCPECGTLHDVEAPTPWYPVIHDFSPDIEGFYQEWLGLPVPERADA.

In terms of assembly, heterohexamer of two alpha, two beta and two gamma subunits. It depends on Fe cation as a cofactor. Mg(2+) serves as cofactor. Requires Zn(2+) as cofactor.

It carries out the reaction acetone + hydrogencarbonate + 2 ATP + 3 H2O = acetoacetate + 2 AMP + 4 phosphate + 4 H(+). Its function is as follows. Catalyzes the carboxylation of acetone to form acetoacetate. Has a reduced activity on butanone, and no activity on 2-pentatone, 3-pentatone, 2-hexanone, chloroacetone, pyruvate, phosphoenolpyruvate, acetaldehyde, propionaldehyde and propylene oxide. The protein is Acetone carboxylase gamma subunit of Xanthobacter autotrophicus (strain ATCC BAA-1158 / Py2).